A 92-amino-acid chain; its full sequence is Small ribosomal subunit protein uS19c (92 aa).

The protein belongs to the universal ribosomal protein uS19 family.

It localises to the plastid. The protein localises to the chloroplast. Functionally, protein S19 forms a complex with S13 that binds strongly to the 16S ribosomal RNA. This Rhodomonas salina (Cryptomonas salina) protein is Small ribosomal subunit protein uS19c.